The chain runs to 527 residues: MATQQQQQQQQQQQQQIKARKDIQIQQAQSASDILGPPEISETEITTESILGDGSFGTVYKGRCRLKDVAVKVMLKQVDQKTLTDFRKEVAIMSKIFHPNIVLFLGACTSTPGKLMICTELMKGNLESLLLDPMVKLPLITRMRMAKDAALGVLWLHSSNPVFIHRDLKTSNLLVDANLTVKVCDFGLSQIKQRGENLKDGQDGAKGTPLWMAPEVLQGRLFNEKADVYSFGLVLWQIFTRQELFPEFDNFFKFVAAICEKQLRPSIPDDCPKSLKELIQKCWDPNPEVRPSFEGIVSELEEIIIDCCIPDEYGAILWKNHFKHENEANWKDFINVFSNFVGLTNANTPSMSDLLQFSPNLNGSTIELNFKCLKSIIVSSPKGPHEEEVVLMEQFGKVLAWFGNLKEDGSQILDKIRQLMECAWFHGDISTSESENRLRQKPEGTFLVRFSTSEYGAYTISKVSKNGGISHQRIHRPQGKFQVNNSKYLSVKELITGEAQALGINTPCLGSRFLSLIYKAQLSGYIN.

The 260-residue stretch at 45-304 (ITTESILGDG…GIVSELEEII (260 aa)) folds into the Protein kinase domain. ATP-binding positions include 51 to 59 (LGDGSFGTV) and Lys-72. The active-site Proton acceptor is Asp-167. Residues 424 to 513 (WFHGDISTSE…INTPCLGSRF (90 aa)) enclose the SH2 domain.

The protein belongs to the protein kinase superfamily. TKL Ser/Thr protein kinase family. SH2 domain-containing protein kinase subfamily.

It localises to the membrane. It carries out the reaction L-seryl-[protein] + ATP = O-phospho-L-seryl-[protein] + ADP + H(+). It catalyses the reaction L-threonyl-[protein] + ATP = O-phospho-L-threonyl-[protein] + ADP + H(+). In terms of biological role, required for proper chemotaxis and phagocytosis; proper spatiotemporal control of F-actin levels in chemotaxing cells. Negative regulator of the PI3K (phosphatidylinositol 3 kinase) pathway. Predominantly phosphorylates serines and threonines and tyrosines at a lower level. The protein is Dual specificity protein kinase shkA (shkA) of Dictyostelium discoideum (Social amoeba).